Consider the following 189-residue polypeptide: Adenylate kinase (189 aa).

Residue 11 to 16 (GSGKGT) participates in ATP binding. The NMP stretch occupies residues 31 to 60 (STGDVLRAEIKNGTELGKTAKGYIDQGQLI). AMP-binding positions include Thr-32, Arg-37, 58-60 (QLI), 86-89 (GFPR), and Gln-93. Positions 127–137 (KRGKDSGRADD) are LID. ATP is bound at residue Arg-128. The AMP site is built by Arg-134 and Arg-145. Gly-173 contributes to the ATP binding site.

The protein belongs to the adenylate kinase family. Monomer.

It localises to the cytoplasm. The catalysed reaction is AMP + ATP = 2 ADP. The protein operates within purine metabolism; AMP biosynthesis via salvage pathway; AMP from ADP: step 1/1. Functionally, catalyzes the reversible transfer of the terminal phosphate group between ATP and AMP. Plays an important role in cellular energy homeostasis and in adenine nucleotide metabolism. The chain is Adenylate kinase from Bacteroides thetaiotaomicron (strain ATCC 29148 / DSM 2079 / JCM 5827 / CCUG 10774 / NCTC 10582 / VPI-5482 / E50).